Reading from the N-terminus, the 393-residue chain is Mitochondrial inner membrane magnesium transporter LPE10 (393 aa).

The transit peptide at 1–45 directs the protein to the mitochondrion; the sequence is MLGLRLPVCRRAVMASPRACWRLWHSSTAAAAGMQDLSAVLQRNL. The next 2 helical transmembrane spans lie at 323 to 343 and 350 to 370; these read FAIGLLSLGSVMFVAALYGMN and EGNVGFALVTATGLVLMVCLF. Positions 340–343 match the YGMN motif; the sequence is YGMN.

The protein belongs to the CorA metal ion transporter (MIT) (TC 1.A.35) family. In terms of assembly, forms homooligomers. Interacts with MRS2.

Its subcellular location is the mitochondrion inner membrane. Mitochondrial inner membrane magnesium transporter required for mitochondrial magnesium homeostasis. Modulates the conductance of the MRS2 channel. Involved in the splicing of mRNA group II introns in mitochondria by affecting mitochondrial magnesium concentrations, which are critical for group II intron splicing. This is Mitochondrial inner membrane magnesium transporter LPE10 (LPE10) from Eremothecium gossypii (strain ATCC 10895 / CBS 109.51 / FGSC 9923 / NRRL Y-1056) (Yeast).